The following is a 308-amino-acid chain: MKITTIAKTSLALGLLTTGVITTTTQAANATTLSSTKVEAPQSTPPSTKIEAPQSKPNATTPPSTKVEAPQQTANATTPPSTKVTTPPSTNTPQPMQSTKSDTPQSPTTKQVPTEINPKFKDLRAYYTKPSLEFKNEIGIILKKWTTIRFMNVVPDYFIYKIALVGKDDKKYGEGVHRNVDVFVVLEENNYNLEKYSVGGITKSNSKKVDHKAGVRITKEDNKGTISHDVSEFKITKEQISLKELDFKLRKQLIEKNNLYGNVGSGKIVIKMKNGGKYTFELHKKLQENRMADVIDGTNIDNIEVNIK.

An N-terminal signal peptide occupies residues 1–30; sequence MKITTIAKTSLALGLLTTGVITTTTQAANA. Positions 32–117 are disordered; that stretch reads TLSSTKVEAP…TTKQVPTEIN (86 aa). 2 stretches are compositionally biased toward polar residues: residues 33 to 47 and 55 to 76; these read LSST…TPPS and SKPN…TANA. A compositionally biased stretch (low complexity) spans 77-93; that stretch reads TTPPSTKVTTPPSTNTP. Residues 94-114 are compositionally biased toward polar residues; the sequence is QPMQSTKSDTPQSPTTKQVPT. The sialyl Lewis X-binding stretch occupies residues 180–278; sequence VDVFVVLEEN…VIKMKNGGKY (99 aa).

It belongs to the staphylococcal/streptococcal toxin family.

Its subcellular location is the secreted. Secreted protein that plays a role in immune innate response inhibition by interfering with host TLR2-mediated pathway. The chain is Staphylococcal superantigen-like 4 from Staphylococcus aureus (strain NCTC 8325 / PS 47).